Here is a 20-residue protein sequence, read N- to C-terminus: Pregnancy-associated glycoprotein 71D (20 aa).

Residue Asn4 is glycosylated (N-linked (GlcNAc...) asparagine).

Belongs to the peptidase A1 family. In terms of tissue distribution, chorionic epithelium (trophectoderm) and placental cotyledons.

The protein localises to the secreted. It localises to the extracellular space. The sequence is that of Pregnancy-associated glycoprotein 71D from Bison bonasus (European bison).